Consider the following 183-residue polypeptide: Photosystem I assembly protein Ycf4 (183 aa).

2 helical membrane passes run tryptophan 23–phenylalanine 43 and valine 64–isoleucine 84.

This sequence belongs to the Ycf4 family.

The protein localises to the plastid. Its subcellular location is the chloroplast thylakoid membrane. Seems to be required for the assembly of the photosystem I complex. The chain is Photosystem I assembly protein Ycf4 from Stigeoclonium helveticum (Green alga).